A 512-amino-acid polypeptide reads, in one-letter code: Protein spinster homolog 3 (512 aa).

Positions 1–30 (MAGGMSAECPEPGPGGLQGQSPGPGRQCPP) are disordered. The next 12 membrane-spanning stretches (helical) occupy residues 50–70 (VLCY…GVLL), 84–104 (GLLQ…FGYL), 112–132 (ATMS…SFIS), 145–165 (IVGT…GDLF), 173–193 (VLAV…VLGS), 204–224 (WALR…ILLV), 260–280 (FVWS…LGFW), 309–329 (LIFG…GAEA), 343–365 (LICA…LAPT), 377–397 (GELL…SVVV), 411–431 (VGHI…SSVL), and 450–470 (FLCC…TALY). A disordered region spans residues 481–512 (PVTGTPDSNDVDSNDLERQGLLSGAGASTEEP).

The protein belongs to the major facilitator superfamily. Spinster (TC 2.A.1.49) family.

Its subcellular location is the membrane. Sphingolipid transporter. The chain is Protein spinster homolog 3 (SPNS3) from Homo sapiens (Human).